The following is a 452-amino-acid chain: Pup--protein ligase (452 aa).

Residue Glu9 coordinates Mg(2+). Arg53 is a binding site for ATP. Tyr55 is a binding site for Mg(2+). The Proton acceptor role is filled by Asp57. Residue Glu63 coordinates Mg(2+). Residues Thr66 and Trp419 each coordinate ATP.

The protein belongs to the Pup ligase/Pup deamidase family. Pup-conjugating enzyme subfamily.

It catalyses the reaction ATP + [prokaryotic ubiquitin-like protein]-L-glutamate + [protein]-L-lysine = ADP + phosphate + N(6)-([prokaryotic ubiquitin-like protein]-gamma-L-glutamyl)-[protein]-L-lysine.. It functions in the pathway protein degradation; proteasomal Pup-dependent pathway. It participates in protein modification; protein pupylation. In terms of biological role, catalyzes the covalent attachment of the prokaryotic ubiquitin-like protein modifier Pup to the proteasomal substrate proteins, thereby targeting them for proteasomal degradation. This tagging system is termed pupylation. The ligation reaction involves the side-chain carboxylate of the C-terminal glutamate of Pup and the side-chain amino group of a substrate lysine. The chain is Pup--protein ligase from Streptosporangium roseum (strain ATCC 12428 / DSM 43021 / JCM 3005 / KCTC 9067 / NCIMB 10171 / NRRL 2505 / NI 9100).